A 346-amino-acid chain; its full sequence is N-acetyl-gamma-glutamyl-phosphate reductase (346 aa).

Residue C149 is part of the active site.

It belongs to the NAGSA dehydrogenase family. Type 1 subfamily.

It is found in the cytoplasm. The catalysed reaction is N-acetyl-L-glutamate 5-semialdehyde + phosphate + NADP(+) = N-acetyl-L-glutamyl 5-phosphate + NADPH + H(+). The protein operates within amino-acid biosynthesis; L-arginine biosynthesis; N(2)-acetyl-L-ornithine from L-glutamate: step 3/4. In terms of biological role, catalyzes the NADPH-dependent reduction of N-acetyl-5-glutamyl phosphate to yield N-acetyl-L-glutamate 5-semialdehyde. The sequence is that of N-acetyl-gamma-glutamyl-phosphate reductase from Citrifermentans bemidjiense (strain ATCC BAA-1014 / DSM 16622 / JCM 12645 / Bem) (Geobacter bemidjiensis).